A 287-amino-acid polypeptide reads, in one-letter code: Elongation factor Ts (287 aa).

The segment at 80–83 (TDFL) is involved in Mg(2+) ion dislocation from EF-Tu.

The protein belongs to the EF-Ts family.

It localises to the cytoplasm. Functionally, associates with the EF-Tu.GDP complex and induces the exchange of GDP to GTP. It remains bound to the aminoacyl-tRNA.EF-Tu.GTP complex up to the GTP hydrolysis stage on the ribosome. The polypeptide is Elongation factor Ts (Pseudomonas putida (strain ATCC 47054 / DSM 6125 / CFBP 8728 / NCIMB 11950 / KT2440)).